The chain runs to 512 residues: Cytochrome P450 77A4 (512 aa).

A helical membrane pass occupies residues 9 to 29 (PTSLDFTFFAIIISGFVFIIT). Cys-456 contacts heme.

The protein belongs to the cytochrome P450 family. Requires heme as cofactor.

The protein resides in the membrane. Functionally, catalyzes the epoxidation of physiological unsaturated fatty acids in vitro. Can use laurate, oleate, linoleate, linolenate and vernolate as substrate. The chain is Cytochrome P450 77A4 (CYP77A4) from Arabidopsis thaliana (Mouse-ear cress).